A 102-amino-acid polypeptide reads, in one-letter code: Nucleoid-associated protein WIGBR5260 (102 aa).

It belongs to the YbaB/EbfC family. As to quaternary structure, homodimer.

The protein localises to the cytoplasm. It is found in the nucleoid. In terms of biological role, binds to DNA and alters its conformation. May be involved in regulation of gene expression, nucleoid organization and DNA protection. The chain is Nucleoid-associated protein WIGBR5260 from Wigglesworthia glossinidia brevipalpis.